Reading from the N-terminus, the 220-residue chain is Deoxyribose-phosphate aldolase (220 aa).

Aspartate 89 functions as the Proton donor/acceptor in the catalytic mechanism. The active-site Schiff-base intermediate with acetaldehyde is lysine 151. Lysine 180 acts as the Proton donor/acceptor in catalysis.

Belongs to the DeoC/FbaB aldolase family. DeoC type 1 subfamily.

The protein resides in the cytoplasm. The enzyme catalyses 2-deoxy-D-ribose 5-phosphate = D-glyceraldehyde 3-phosphate + acetaldehyde. The protein operates within carbohydrate degradation; 2-deoxy-D-ribose 1-phosphate degradation; D-glyceraldehyde 3-phosphate and acetaldehyde from 2-deoxy-alpha-D-ribose 1-phosphate: step 2/2. Functionally, catalyzes a reversible aldol reaction between acetaldehyde and D-glyceraldehyde 3-phosphate to generate 2-deoxy-D-ribose 5-phosphate. In Staphylococcus haemolyticus (strain JCSC1435), this protein is Deoxyribose-phosphate aldolase.